The chain runs to 383 residues: Lipid-A-disaccharide synthase (383 aa).

This sequence belongs to the LpxB family.

The catalysed reaction is 2-N,3-O-bis[(3R)-3-hydroxytetradecanoyl]-alpha-D-glucosaminyl 1-phosphate + UDP-2-N,3-O-bis[(3R)-3-hydroxytetradecanoyl]-alpha-D-glucosamine = lipid A disaccharide (E. coli) + UDP + H(+). It carries out the reaction a lipid X + a UDP-2-N,3-O-bis[(3R)-3-hydroxyacyl]-alpha-D-glucosamine = a lipid A disaccharide + UDP + H(+). The protein operates within glycolipid biosynthesis; lipid IV(A) biosynthesis; lipid IV(A) from (3R)-3-hydroxytetradecanoyl-[acyl-carrier-protein] and UDP-N-acetyl-alpha-D-glucosamine: step 5/6. Its function is as follows. Condensation of UDP-2,3-diacylglucosamine and 2,3-diacylglucosamine-1-phosphate to form lipid A disaccharide, a precursor of lipid A, a phosphorylated glycolipid that anchors the lipopolysaccharide to the outer membrane of the cell. The protein is Lipid-A-disaccharide synthase of Pectobacterium atrosepticum (strain SCRI 1043 / ATCC BAA-672) (Erwinia carotovora subsp. atroseptica).